The sequence spans 309 residues: Acetylglutamate kinase (309 aa).

Substrate contacts are provided by residues 69–70 (GG), Arg91, and Asn194.

Belongs to the acetylglutamate kinase family. ArgB subfamily.

Its subcellular location is the cytoplasm. The catalysed reaction is N-acetyl-L-glutamate + ATP = N-acetyl-L-glutamyl 5-phosphate + ADP. It functions in the pathway amino-acid biosynthesis; L-arginine biosynthesis; N(2)-acetyl-L-ornithine from L-glutamate: step 2/4. Catalyzes the ATP-dependent phosphorylation of N-acetyl-L-glutamate. This is Acetylglutamate kinase from Vesicomyosocius okutanii subsp. Calyptogena okutanii (strain HA).